We begin with the raw amino-acid sequence, 360 residues long: 3-dehydroquinate synthase (360 aa).

Residues 71–76, 105–109, 129–130, lysine 142, lysine 151, and 169–172 each bind NAD(+); these read DGEQYK, GVIGD, TT, and CLDT. Residues glutamate 184, histidine 247, and histidine 264 each coordinate Zn(2+).

The protein belongs to the sugar phosphate cyclases superfamily. Dehydroquinate synthase family. Co(2+) is required as a cofactor. It depends on Zn(2+) as a cofactor. The cofactor is NAD(+).

The protein localises to the cytoplasm. The catalysed reaction is 7-phospho-2-dehydro-3-deoxy-D-arabino-heptonate = 3-dehydroquinate + phosphate. The protein operates within metabolic intermediate biosynthesis; chorismate biosynthesis; chorismate from D-erythrose 4-phosphate and phosphoenolpyruvate: step 2/7. Catalyzes the conversion of 3-deoxy-D-arabino-heptulosonate 7-phosphate (DAHP) to dehydroquinate (DHQ). This chain is 3-dehydroquinate synthase, found in Erwinia tasmaniensis (strain DSM 17950 / CFBP 7177 / CIP 109463 / NCPPB 4357 / Et1/99).